The following is a 231-amino-acid chain: tRNA (guanine-N(7)-)-methyltransferase (231 aa).

Glu62, Glu87, Asp114, and Asp137 together coordinate S-adenosyl-L-methionine. The active site involves Asp137. Substrate-binding positions include Lys141, Asp173, and 210 to 213; that span reads TKFE.

It belongs to the class I-like SAM-binding methyltransferase superfamily. TrmB family.

The catalysed reaction is guanosine(46) in tRNA + S-adenosyl-L-methionine = N(7)-methylguanosine(46) in tRNA + S-adenosyl-L-homocysteine. Its pathway is tRNA modification; N(7)-methylguanine-tRNA biosynthesis. In terms of biological role, catalyzes the formation of N(7)-methylguanine at position 46 (m7G46) in tRNA. This chain is tRNA (guanine-N(7)-)-methyltransferase, found in Methylococcus capsulatus (strain ATCC 33009 / NCIMB 11132 / Bath).